The primary structure comprises 512 residues: Histidine ammonia-lyase (512 aa).

A cross-link (5-imidazolinone (Ala-Gly)) is located at residues 144 to 146 (ASG). Residue Ser145 is modified to 2,3-didehydroalanine (Ser).

Belongs to the PAL/histidase family. In terms of processing, contains an active site 4-methylidene-imidazol-5-one (MIO), which is formed autocatalytically by cyclization and dehydration of residues Ala-Ser-Gly.

The protein localises to the cytoplasm. It catalyses the reaction L-histidine = trans-urocanate + NH4(+). The protein operates within amino-acid degradation; L-histidine degradation into L-glutamate; N-formimidoyl-L-glutamate from L-histidine: step 1/3. The protein is Histidine ammonia-lyase of Desulfotalea psychrophila (strain LSv54 / DSM 12343).